A 502-amino-acid chain; its full sequence is Bone morphogenetic protein receptor type-1B (502 aa).

The N-terminal stretch at 1 to 13 is a signal peptide; the sequence is MLLRSSGKLNVGT. Positions 1–24 are disordered; the sequence is MLLRSSGKLNVGTKKEDGESTAPT. The Extracellular segment spans residues 14 to 126; sequence KKEDGESTAP…DFVDGPIHHK (113 aa). Cystine bridges form between Cys32–Cys53, Cys34–Cys38, Cys47–Cys71, Cys81–Cys95, and Cys96–Cys102. A helical transmembrane segment spans residues 127–148; sequence ALLISVTVCSLLLVLIILFCYF. Topologically, residues 149 to 502 are cytoplasmic; sequence RYKRQEARPR…KMSESQDIKL (354 aa). The region spanning 174 to 203 is the GS domain; the sequence is ESLRDLIEQSQSSGSGSGLPLLVQRTIAKQ. A Protein kinase domain is found at 204–494; the sequence is IQMVKQIGKG…LRVKKTLAKM (291 aa). ATP-binding positions include 210–218 and Lys231; that span reads IGKGRYGEV. Asp332 (proton acceptor) is an active-site residue.

This sequence belongs to the protein kinase superfamily. TKL Ser/Thr protein kinase family. TGFB receptor subfamily. As to quaternary structure, interacts with high affinity with GDF5; positively regulates chondrocyte differentiation. Interacts with SCUBE3. Interacts with TSC22D1/TSC-22. Interacts with TGFBR3. It depends on Mg(2+) as a cofactor. Mn(2+) is required as a cofactor. In terms of processing, autophosphorylated.

The protein resides in the cell membrane. It catalyses the reaction L-threonyl-[receptor-protein] + ATP = O-phospho-L-threonyl-[receptor-protein] + ADP + H(+). It carries out the reaction L-seryl-[receptor-protein] + ATP = O-phospho-L-seryl-[receptor-protein] + ADP + H(+). In terms of biological role, on ligand binding, forms a receptor complex consisting of two type II and two type I transmembrane serine/threonine kinases. Type II receptors phosphorylate and activate type I receptors which autophosphorylate, then bind and activate SMAD transcriptional regulators. Receptor for BMP7/OP-1. Receptor for GDF5. Positively regulates chondrocyte differentiation through GDF5 interaction. The protein is Bone morphogenetic protein receptor type-1B (Bmpr1b) of Mus musculus (Mouse).